A 156-amino-acid polypeptide reads, in one-letter code: MNLNATLIGQLIAFALFVWFCMKFVWPPIINAIETRQSQIANALASAEAAKKEQADTKNLVEQELSAAKVQAQDILDAANKRRNEVLDEVKAEAEELKAKIIAQGYAEVEAERKRVQEELRLKVASLAVAGAEKIVGRSIDEAANNDIIDKLVAEL.

Residues 11 to 31 (LIAFALFVWFCMKFVWPPIIN) form a helical membrane-spanning segment.

The protein belongs to the ATPase B chain family. In terms of assembly, F-type ATPases have 2 components, F(1) - the catalytic core - and F(0) - the membrane proton channel. F(1) has five subunits: alpha(3), beta(3), gamma(1), delta(1), epsilon(1). F(0) has three main subunits: a(1), b(2) and c(10-14). The alpha and beta chains form an alternating ring which encloses part of the gamma chain. F(1) is attached to F(0) by a central stalk formed by the gamma and epsilon chains, while a peripheral stalk is formed by the delta and b chains.

The protein resides in the cell inner membrane. Its function is as follows. F(1)F(0) ATP synthase produces ATP from ADP in the presence of a proton or sodium gradient. F-type ATPases consist of two structural domains, F(1) containing the extramembraneous catalytic core and F(0) containing the membrane proton channel, linked together by a central stalk and a peripheral stalk. During catalysis, ATP synthesis in the catalytic domain of F(1) is coupled via a rotary mechanism of the central stalk subunits to proton translocation. Component of the F(0) channel, it forms part of the peripheral stalk, linking F(1) to F(0). This is ATP synthase subunit b from Haemophilus influenzae (strain PittEE).